A 155-amino-acid polypeptide reads, in one-letter code: Urease accessory protein UreE (155 aa).

It belongs to the UreE family.

It is found in the cytoplasm. Its function is as follows. Involved in urease metallocenter assembly. Binds nickel. Probably functions as a nickel donor during metallocenter assembly. The chain is Urease accessory protein UreE from Synechococcus sp. (strain CC9311).